Here is a 1323-residue protein sequence, read N- to C-terminus: MRGAGGPRGPRGPAKMLLLLALACASPFPEEVPGPGAVGGGTGGARPLNVALVFSGPAYAAEAARLGPAVAAAVRSPGLDVRPVALVLNGSDPRSLVLQLCDLLSGLRVHGVVFEDDSRAPAVAPILDFLSAQTSLPIVAVHGGAALVLTPKEKGSTFLQLGSSTEQQLQVIFEVLEEYDWTSFVAVTTRAPGHRAFLSYIEVLTDGSLVGWEHRGALTLDPGAGEAVLGAQLRSVSAQIRLLFCAREEAEPVFRAAEEAGLTGPGYVWFMVGPQLAGGGGSGVPGEPLLLPGGSPLPAGLFAVRSAGWRDDLARRVAAGVAVVARGAQALLRDYGFLPELGHDCRTQNRTHRGESLHRYFMNITWDNRDYSFNEDGFLVNPSLVVISLTRDRTWEVVGSWEQQTLRLKYPLWSRYGRFLQPVDDTQHLTVATLEERPFVIVEPADPISGTCIRDSVPCRSQLNRTHSPPPDAPRPEKRCCKGFCIDILKRLAHTIGFSYDLYLVTNGKHGKKIDGVWNGMIGEVFYQRADMAIGSLTINEERSEIVDFSVPFVETGISVMVARSNGTVSPSAFLEPYSPAVWVMMFVMCLTVVAVTVFIFEYLSPVGYNRSLATGKRPGGSTFTIGKSIWLLWALVFNNSVPVENPRGTTSKIMVLVWAFFAVIFLASYTANLAAFMIQEEYVDTVSGLSDRKFQRPQEQYPPLKFGTVPNGSTEKNIRSNYPDMHSYMVRYNQPRVEEALTQLKAGKLDAFIYDAAVLNYMARKDEGCKLVTIGSGKVFATTGYGIALHKGSRWKRPIDLALLQFLGDDEIEMLERLWLSGICHNDKIEVMSSKLDIDNMAGVFYMLLVAMGLSLLVFAWEHLVYWRLRHCLGPTHRMDFLLAFSRGMYSCCSAEAAPPPAKPPPPPQPLPSPAYPAARPPPGPAPFVPRERAAADRWRRAKGTGPPGGAAIADGFHRYYGPIEPQGLGLGEARAAPRGAAGRPLSPPTTQPPQKPPPSYFAIVREQEPTEPPAGAFPGFPSPPAPPAAAAAAVGPPLCRLAFEDESPPAPSRWPRSDPESQPLLGGGAGGPSAGAPTAPPPRRAAPPPCAYLDLEPSPSDSEDSESLGGASLGGLEPWWFADFPYPYAERLGPPPGRYWSVDKLGGWRAGSWDYLPPRGGPAWHCRHCASLELLPPPRHLSCSHDGLDGGWWAPPPPPWAAGPPPRRRARCGCPRPHPHRPRASHRAPAAAPHHHRHRRAAGGWDFPPPAPTSRSLEDLSSCPRAAPTRRLTGPSRHARRCPHAAHWGPPLPTASHRRHRGGDLGTRRGSAHFSSLESEV.

Residues 1–27 form the signal peptide; sequence MRGAGGPRGPRGPAKMLLLLALACASP. Residues 28–579 lie on the Extracellular side of the membrane; that stretch reads FPEEVPGPGA…SPSAFLEPYS (552 aa). Residue N89 is glycosylated (N-linked (GlcNAc...) asparagine). A disulfide bridge connects residues C101 and C345. Residues N349, N363, N381, and N464 are each glycosylated (N-linked (GlcNAc...) asparagine). 2 disulfide bridges follow: C452–C480 and C459–C481. L-glutamate is bound by residues S536, T538, and R543. N566 carries an N-linked (GlcNAc...) asparagine glycan. The helical transmembrane segment at 580–601 threads the bilayer; it reads PAVWVMMFVMCLTVVAVTVFIF. Residues 602-626 are Cytoplasmic-facing; it reads EYLSPVGYNRSLATGKRPGGSTFTI. Positions 627 to 638 form an intramembrane region, discontinuously helical; it reads GKSIWLLWALVF. The tract at residues 628–647 is pore-forming; it reads KSIWLLWALVFNNSVPVENP. Over 639–650 the chain is Cytoplasmic; it reads NNSVPVENPRGT. Residues 651 to 671 traverse the membrane as a helical segment; it reads TSKIMVLVWAFFAVIFLASYT. Residues 672–840 are Extracellular-facing; sequence ANLAAFMIQE…EVMSSKLDID (169 aa). A glycan (N-linked (GlcNAc...) asparagine) is linked at N712. The L-glutamate site is built by S714, T715, and D756. C770 and C825 are disulfide-bonded. The chain crosses the membrane as a helical span at residues 841-864; that stretch reads NMAGVFYMLLVAMGLSLLVFAWEH. Residues 865-1323 are Cytoplasmic-facing; the sequence is LVYWRLRHCL…AHFSSLESEV (459 aa). Disordered regions lie at residues 897-952, 977-1112, and 1201-1323; these read EAAP…PGGA, AAPR…SLGG, and PWAA…ESEV. Pro residues predominate over residues 899–929; sequence APPPAKPPPPPQPLPSPAYPAARPPPGPAPF. Residues 931–940 show a composition bias toward basic and acidic residues; it reads PRERAAADRW. Positions 977 to 986 are enriched in low complexity; it reads AAPRGAAGRP. Positions 987–1001 are enriched in pro residues; it reads LSPPTTQPPQKPPPS. Over residues 1030–1039 the composition is skewed to low complexity; that stretch reads AAAAAAVGPP. Positions 1080-1092 are enriched in pro residues; that stretch reads TAPPPRRAAPPPC. Over residues 1208–1228 the composition is skewed to basic residues; sequence PRRRARCGCPRPHPHRPRASH. An Omega-N-methylarginine modification is found at R1303. S1313 is subject to Phosphoserine. The short motif at 1321–1323 is the PDZ-binding element; sequence SEV.

The protein belongs to the glutamate-gated ion channel (TC 1.A.10.1) family. NR2D/GRIN2D subfamily. Heterotetramer. Forms heterotetrameric channels composed of two GluN1/zeta subunits (GRIN1), and two identical GluN2/epsilon subunits (GRIN2A, GRIN2B, GRIN2C or GRIN2D) or GluN3 subunits (GRIN3A or GRIN3B) (in vitro). In vivo, the subunit composition may depend on the expression levels of the different subunits. Interacts with PDZ domains of PATJ and DLG4. Expressed in brain, mainly in the subcortical region.

It is found in the cell membrane. The protein resides in the postsynaptic cell membrane. The enzyme catalyses Ca(2+)(in) = Ca(2+)(out). It catalyses the reaction Na(+)(in) = Na(+)(out). The catalysed reaction is K(+)(in) = K(+)(out). Its function is as follows. Component of N-methyl-D-aspartate (NMDA) receptors (NMDARs) that function as heterotetrameric, ligand-gated cation channels with high calcium permeability and voltage-dependent block by Mg(2+). Participates in synaptic plasticity for learning and memory formation. Channel activation requires binding of the neurotransmitter L-glutamate to the GluN2 subunit, glycine or D-serine binding to the GluN1 subunit, plus membrane depolarization to eliminate channel inhibition by Mg(2+). NMDARs mediate simultaneously the potasium efflux and the influx of calcium and sodium. Each GluN2 subunit confers differential attributes to channel properties, including activation, deactivation and desensitization kinetics, pH sensitivity, Ca2(+) permeability, and binding to allosteric modulators. The polypeptide is Glutamate receptor ionotropic, NMDA 2D (Rattus norvegicus (Rat)).